We begin with the raw amino-acid sequence, 640 residues long: Antigenic protein NP1 (640 aa).

The region spanning 1 to 288 (VQVSIGKCNH…SYVNIAHAFG (288 aa)) is the Peptidase M60 domain. Residues 463–615 (LDPHQVEYEV…TDQSSVNVSK (153 aa)) enclose the PA14 domain.

This is Antigenic protein NP1 from Entamoeba histolytica.